The primary structure comprises 766 residues: LPS-assembly protein LptD (766 aa).

Positions 1-18 (MNIRYLLLLSLMPHLVWA) are cleaved as a signal peptide.

This sequence belongs to the LptD family. In terms of assembly, component of the lipopolysaccharide transport and assembly complex. Interacts with LptE and LptA.

The protein localises to the cell outer membrane. Together with LptE, is involved in the assembly of lipopolysaccharide (LPS) at the surface of the outer membrane. The protein is LPS-assembly protein LptD of Shewanella denitrificans (strain OS217 / ATCC BAA-1090 / DSM 15013).